The following is a 342-amino-acid chain: P2Y purinoceptor 12 (342 aa).

Residues 1-27 are Extracellular-facing; that stretch reads MQAIDNLTSAPGNTSLCTRDYKITQVL. N-linked (GlcNAc...) asparagine glycans are attached at residues Asn6 and Asn13. 2 disulfide bridges follow: Cys17–Cys270 and Cys97–Cys175. A helical transmembrane segment spans residues 28 to 50; that stretch reads FPLLYTVLFFVGLITNSLAMRIF. At 51 to 61 the chain is on the cytoplasmic side; the sequence is FQIRSKSNFII. A phosphoserine mark is found at Ser55 and Ser57. The chain crosses the membrane as a helical span at residues 62 to 82; the sequence is FLKNTVISDLLMILTFPFKIL. Residues 83–97 lie on the Extracellular side of the membrane; the sequence is SDAKLGAGPLRTFVC. Arg93, Cys97, and Tyr105 together coordinate ADP. A helical transmembrane segment spans residues 98 to 118; that stretch reads QVTSVIFYFTMYISISFLGLI. Topologically, residues 119–142 are cytoplasmic; it reads TIDRYQKTTRPFKTSNPKNLLGAK. Residues 143 to 162 form a helical membrane-spanning segment; it reads ILSVLIWAFMFLLSLPNMIL. ADP-binding positions include 156-159, 175-179, His187, and Asn191; these read SLPN and CSFLK. Over 163 to 185 the chain is Extracellular; that stretch reads TNRRPRDKNVKKCSFLKSEFGLV. A helical membrane pass occupies residues 186-207; that stretch reads WHEIVNYICQVIFWINFLIVIV. At 208-233 the chain is on the cytoplasmic side; sequence CYTLITKELYRSYVRTRGVGKVPRKK. A helical membrane pass occupies residues 234–259; the sequence is VNVKVFIIIAVFFICFVPFHFARIPY. ADP contacts are provided by residues 256–259, Gln263, and Lys280; that span reads RIPY. Residues 260–278 lie on the Extracellular side of the membrane; sequence TLSQTRDVFDCAAENTLFY. The chain crosses the membrane as a helical span at residues 279-298; that stretch reads VKESTLWLTSLNACLDPFIY. The Cytoplasmic portion of the chain corresponds to 299-342; the sequence is FFLCKSFRNSLISMLKCPNSATSQSQDNRKKEQDGGDPNEETPM. The tract at residues 317–342 is disordered; it reads NSATSQSQDNRKKEQDGGDPNEETPM. The segment covering 333–342 has biased composition (acidic residues); it reads GGDPNEETPM.

Belongs to the G-protein coupled receptor 1 family.

The protein localises to the cell membrane. Receptor for ADP and ATP coupled to G-proteins that inhibit the adenylyl cyclase second messenger system. Required for normal platelet aggregation and blood coagulation. This chain is P2Y purinoceptor 12 (P2RY12), found in Macaca fascicularis (Crab-eating macaque).